Reading from the N-terminus, the 452-residue chain is Probable hexaprenyl pyrophosphate synthase, mitochondrial (452 aa).

Residues Lys-108, Arg-111, and His-204 each coordinate isopentenyl diphosphate. Asp-211 and Asp-215 together coordinate Mg(2+). Arg-220 provides a ligand contact to an all-trans-polyprenyl diphosphate. Arg-221 lines the isopentenyl diphosphate pocket. The an all-trans-polyprenyl diphosphate site is built by Lys-303, Thr-304, Gln-341, and Lys-358.

It belongs to the FPP/GGPP synthase family. Mg(2+) is required as a cofactor.

The protein resides in the mitochondrion. It participates in cofactor biosynthesis; ubiquinone biosynthesis. Assembly of polyisoprenoid side chains. The polyprenyl synthase of coenzyme Q biosynthesis catalyzes the formation from isopentenyl diphosphate of all trans-polyprenyl pyrophosphates generally ranging in length of between 6 and 10 isoprene units depending on the species. The sequence is that of Probable hexaprenyl pyrophosphate synthase, mitochondrial (COQ1) from Yarrowia lipolytica (strain CLIB 122 / E 150) (Yeast).